The chain runs to 78 residues: Putative membrane protein insertion efficiency factor (78 aa).

Belongs to the UPF0161 family.

The protein resides in the cell inner membrane. Its function is as follows. Could be involved in insertion of integral membrane proteins into the membrane. The sequence is that of Putative membrane protein insertion efficiency factor from Prochlorococcus marinus (strain MIT 9301).